The following is a 112-amino-acid chain: Tyrosine-protein phosphatase 8 (112 aa).

The 112-residue stretch at 1-112 (ENSTAIVMIT…ANSEYGPVVV (112 aa)) folds into the Tyrosine-protein phosphatase domain.

It belongs to the protein-tyrosine phosphatase family.

It carries out the reaction O-phospho-L-tyrosyl-[protein] + H2O = L-tyrosyl-[protein] + phosphate. The polypeptide is Tyrosine-protein phosphatase 8 (STY-8) (Styela plicata (Wrinkled sea squirt)).